Consider the following 436-residue polypeptide: GTPase Der (436 aa).

EngA-type G domains follow at residues 4–167 (PTVA…PVEE) and 175–351 (IRFS…ESQN). GTP-binding positions include 10–17 (GRPNVGKS), 57–61 (DTGGI), 119–122 (NKVD), 181–188 (GRPNVGKS), 229–233 (DTAGM), and 294–297 (NKWD). Residues 352–436 (KRIPSAVLND…PIHLIARKRK (85 aa)) form the KH-like domain.

This sequence belongs to the TRAFAC class TrmE-Era-EngA-EngB-Septin-like GTPase superfamily. EngA (Der) GTPase family. Associates with the 50S ribosomal subunit.

Its function is as follows. GTPase that plays an essential role in the late steps of ribosome biogenesis. This chain is GTPase Der, found in Streptococcus pyogenes serotype M1.